We begin with the raw amino-acid sequence, 421 residues long: Serine/threonine-protein kinase OXI1 (421 aa).

Residues 17-329 enclose the Protein kinase domain; that stretch reads LEVLSLLGRG…VEEIKGHDFF (313 aa). ATP-binding positions include 23-31 and K45; that span reads LGRGAKGVV. The active-site Proton acceptor is D149. The tract at residues 167–246 is activation loop; the sequence is DFDLSTNLAP…VGTEEYVAPE (80 aa). Phosphoserine; by PDPK1 is present on S235. In terms of domain architecture, AGC-kinase C-terminal spans 330–421; that stretch reads RGVDWEKVIL…LESDNNFLVF (92 aa). The PIF signature appears at 418–421; sequence FLVF.

Belongs to the protein kinase superfamily. AGC Ser/Thr protein kinase family. In terms of assembly, interacts with PDK1 and PDK2. Expressed in roots and root hair cells.

It carries out the reaction L-seryl-[protein] + ATP = O-phospho-L-seryl-[protein] + ADP + H(+). The enzyme catalyses L-threonyl-[protein] + ATP = O-phospho-L-threonyl-[protein] + ADP + H(+). With respect to regulation, activated in response to hydrogen peroxide and cellulase elicitor. Activated by PDK1 in a phosphatidic acid dependent manner. Involved in oxidative burst-mediated signaling. Required for basal resistance to P.parasitica infection and root hair growth. Partly required for the activation of MPK3 and MPK6 by hydrogen peroxide and cellulase elicitor. The chain is Serine/threonine-protein kinase OXI1 from Arabidopsis thaliana (Mouse-ear cress).